The chain runs to 505 residues: Probable folylpolyglutamate synthase (505 aa).

89–92 (GKGS) lines the ATP pocket. Serine 121, glutamate 190, and histidine 218 together coordinate Mg(2+). Positions 332 and 346 each coordinate ATP.

It belongs to the folylpolyglutamate synthase family. It depends on a monovalent cation as a cofactor.

It is found in the mitochondrion inner membrane. The protein localises to the mitochondrion matrix. It localises to the cytoplasm. It catalyses the reaction (6S)-5,6,7,8-tetrahydrofolyl-(gamma-L-Glu)(n) + L-glutamate + ATP = (6S)-5,6,7,8-tetrahydrofolyl-(gamma-L-Glu)(n+1) + ADP + phosphate + H(+). It functions in the pathway cofactor biosynthesis; tetrahydrofolylpolyglutamate biosynthesis. Catalyzes conversion of folates to polyglutamate derivatives allowing concentration of folate compounds in the cell and the intracellular retention of these cofactors, which are important substrates for most of the folate-dependent enzymes that are involved in one-carbon transfer reactions involved in purine, pyrimidine and amino acid synthesis. The protein is Probable folylpolyglutamate synthase (met7) of Schizosaccharomyces pombe (strain 972 / ATCC 24843) (Fission yeast).